The primary structure comprises 69 residues: UPF0337 protein ECA0631 (69 aa).

Belongs to the UPF0337 (CsbD) family.

This chain is UPF0337 protein ECA0631, found in Pectobacterium atrosepticum (strain SCRI 1043 / ATCC BAA-672) (Erwinia carotovora subsp. atroseptica).